A 132-amino-acid polypeptide reads, in one-letter code: Small ribosomal subunit protein uS8c (132 aa).

This sequence belongs to the universal ribosomal protein uS8 family. In terms of assembly, part of the 30S ribosomal subunit.

The protein resides in the plastid. It is found in the chloroplast. Functionally, one of the primary rRNA binding proteins, it binds directly to 16S rRNA central domain where it helps coordinate assembly of the platform of the 30S subunit. In Dioscorea elephantipes (Elephant's foot yam), this protein is Small ribosomal subunit protein uS8c (rps8).